The primary structure comprises 699 residues: MSKMNKLEHIRNIGICAHIDAGKTTTTERILYYTGKSHKIGEVHDGGATMDWMEQEQERGITITSAATTCRWQDKIINIIDTPGHVDFTIEVERSLRVLDGAVAVFDGVAGVEPQSETVWRQADKYNVPRMCFVNKMDRMGADFYRCVEMIKDRLGAKPLVLQLPVGIEENFKGIIDLVKMKAVIWKDESLGAEYCEEDIPADMKDKAEEYRAKLLDMVVELDDTIMEKYLSGEEVTEEEIKRLIRKGTISAAFYPVLCGSAFKNKGVQPLLDAVVYFLPSPIDIGIVKGIEVSTGEEKDFPVSVIEPFAALAFKIMNDPFVGSLTFIRIYSGKIASGITVINTVKNKKEKIGRMLLMHANNREDVKEASAGDIVALAGLKDTTTGDTLSDVDKQVILERMEFPEPVIELAVEPKSTADQEKMGLALSRLAAEDPSFRVSMDHETGQTVIKGMGELHLEIIIDRMRREFKVEANIGAPQVAYRETITKACEIDYTHKKQSGGAGQFARVKIIFEPLKEVKDLEDEDKNKTFVFASKIVGGAVPKEYIPGVEKGLNNIRETGVIAGYPMIDFKATLVDGAFHDVDSSVLAFEIAAKAAFREGMPKGDPKLLEPIMKVEVITPDEYMGDIIGDLNSRRGQIQSMDPRGNAQVVTANVPLAEMFGYVNTLRSLSQGRAQFSMIFSHYDQVPSQVADIIKAKK.

The region spanning 8–283 is the tr-type G domain; sequence EHIRNIGICA…AVVYFLPSPI (276 aa). GTP is bound by residues 17–24, 81–85, and 135–138; these read AHIDAGKT, DTPGH, and NKMD.

Belongs to the TRAFAC class translation factor GTPase superfamily. Classic translation factor GTPase family. EF-G/EF-2 subfamily.

The protein resides in the cytoplasm. Its function is as follows. Catalyzes the GTP-dependent ribosomal translocation step during translation elongation. During this step, the ribosome changes from the pre-translocational (PRE) to the post-translocational (POST) state as the newly formed A-site-bound peptidyl-tRNA and P-site-bound deacylated tRNA move to the P and E sites, respectively. Catalyzes the coordinated movement of the two tRNA molecules, the mRNA and conformational changes in the ribosome. This is Elongation factor G from Rickettsia akari (strain Hartford).